A 600-amino-acid chain; its full sequence is Chaperone protein DnaK (600 aa).

The residue at position 175 (T175) is a Phosphothreonine; by autocatalysis. Positions 572–600 are disordered; sequence FAQQTQQQDPNNQKDDVTEATVTDDSTKK. Residues 591 to 600 show a composition bias toward polar residues; sequence ATVTDDSTKK.

This sequence belongs to the heat shock protein 70 family.

Acts as a chaperone. The sequence is that of Chaperone protein DnaK from Ureaplasma urealyticum serovar 10 (strain ATCC 33699 / Western).